A 525-amino-acid chain; its full sequence is Frizzled-4 (525 aa).

A signal peptide spans 1–24; that stretch reads MERRGGGGRMLALLLAGLLGGARG. The Extracellular portion of the chain corresponds to 25 to 200; the sequence is FGDEEERRCD…KCGYDAGLYS (176 aa). Positions 28–149 constitute an FZ domain; it reads EEERRCDAIR…NDHNHMCMEG (122 aa). 8 cysteine pairs are disulfide-bonded: Cys-33–Cys-94, Cys-41–Cys-87, Cys-78–Cys-116, Cys-105–Cys-146, Cys-109–Cys-133, Cys-169–Cys-188, Cys-192–Cys-270, and Cys-290–Cys-365. N-linked (GlcNAc...) asparagine glycosylation is present at Asn-47. N-linked (GlcNAc...) asparagine glycosylation is present at Asn-132. Residues 201-231 form a helical membrane-spanning segment; the sequence is RSAKEFTDIWMAVWASLCFISTAFTVLTFLI. Residues 232 to 237 lie on the Cytoplasmic side of the membrane; sequence DSSRFS. The chain crosses the membrane as a helical span at residues 238 to 263; that stretch reads YPERPIIFLSMCYNIYSIAYIVRLTV. Residues 264–287 are Extracellular-facing; the sequence is GRERISCDFEEAAEPVLIQEGLKN. A helical transmembrane segment spans residues 288–321; that stretch reads TGCAIIFLLMYFFGMASSIWWVILTLTWFLAAGL. Over 322–324 the chain is Cytoplasmic; the sequence is KWG. The helical transmembrane segment at 325–353 threads the bilayer; the sequence is HEAIEMHSSYFHIAAWAIPAVKTIVILIM. At 354 to 371 the chain is on the extracellular side; that stretch reads RLVDADELTGLCYVGNQN. The helical transmembrane segment at 372–406 threads the bilayer; the sequence is LDALTGFVVAPLFTYLVIGTLFIAAGLVALFKIRS. The Cytoplasmic portion of the chain corresponds to 407–419; it reads NLQKDGTKTDKLE. Residues 420 to 448 form a helical membrane-spanning segment; sequence RLMVKIGVFSVLYTVPATCVIACYFYEIS. Topologically, residues 449-461 are extracellular; sequence NWAVFRYSADDSN. A helical membrane pass occupies residues 462-483; that stretch reads MAVEMLKIFMSLLVGITSGMWI. Over 484–525 the chain is Cytoplasmic; the sequence is WSAKTLHTWQKCSNRLVNSGKVKREKRADGWVKPGKGNETVV. A Lys-Thr-X-X-X-Trp motif, mediates interaction with the PDZ domain of Dvl family members motif is present at residues 487–492; that stretch reads KTLHTW. A PDZ-binding motif is present at residues 523-525; the sequence is TVV.

This sequence belongs to the G-protein coupled receptor Fz/Smo family. Interacts (via FZ domain) with TSKU; TSKU competes with WNT2B for binding to FZD4, inhibiting Wnt signaling and repressing peripheral eye development. In terms of tissue distribution, expressed in the developing kidney, interdigital spaces and optic cup.

It localises to the cell membrane. Receptor for Wnt proteins. Most frizzled receptors are coupled to the beta-catenin canonical signaling pathway, which leads to the activation of disheveled proteins, inhibition of GSK-3 kinase, nuclear accumulation of beta-catenin and activation of Wnt target genes. A second signaling pathway involving PKC and calcium fluxes has been seen for some family members, but it is not yet clear if it represents a distinct pathway or if it can be integrated in the canonical pathway, as PKC seems to be required for Wnt-mediated inactivation of GSK-3 kinase. Both pathways seem to involve interactions with G-proteins. May be involved in transduction and intercellular transmission of polarity information during tissue morphogenesis and/or in differentiated tissues. The chain is Frizzled-4 (FZD4) from Gallus gallus (Chicken).